The chain runs to 258 residues: MSRHPSDRKVYVGDLGNNARKNDLEYVFGAYGSLRSVWIARNPPGFAFVEFESARDAADAVRGLDGRTVCGRRARVELSTGKYARSGGGGGGGGGGGGGGGLGGRDRGGGGRGDDKCYECGGRGHFARHCRERKARQRRRSNSFSRSRSTSRRRRTRSKSGTRSRSRSAGSVGRRSGRSNGRDENGSASRYSDHERNGSGAVDSPPPPKRRYEDEDDDRVRGSPRSRSRSRSASPAVRRGSPPRRRGDSSASRSVSRD.

The RRM domain occupies 8–81; the sequence is RKVYVGDLGN…RRARVELSTG (74 aa). 2 disordered regions span residues 81–113 and 130–258; these read GKYA…GGRG and CRER…VSRD. Residues 86–103 show a composition bias toward gly residues; that stretch reads SGGGGGGGGGGGGGGGLG. The segment covering 104–113 has biased composition (basic and acidic residues); the sequence is GRDRGGGGRG. Residues 116 to 132 form a CCHC-type zinc finger; sequence KCYECGGRGHFARHCRE. 2 stretches are compositionally biased toward basic residues: residues 130–141 and 149–166; these read CRERKARQRRRS and STSR…RSRS. Basic and acidic residues-rich tracts occupy residues 180–197 and 210–221; these read NGRD…HERN and RRYEDEDDDRVR. Composition is skewed to low complexity over residues 231-240 and 249-258; these read RSASPAVRRG and SSASRSVSRD.

In terms of assembly, interacts (via Arg/Ser-rich region) with Alsin2/CG7564, Rbp1 and Doa (via N-terminus). Post-translationally, highly phosphorylated. May be phosphorylated by the serine/threonine-protein kinase Doa.

It is found in the nucleus. In terms of biological role, serine/arginine-rich splicing factor (SR protein) involved in differential exon usage during RNA transcript processing, probably by binding exonic splicing enhancer elements and recruiting components of the splicing machinery. Binds RNA stem-loop structures with consensus sequence 5'-CCGUNUNKNW-3'. Regulator of genes involved in lipid and carbohydrate metabolism, the immune response and the response to xenobiotics. The polypeptide is Serine/arginine-rich splicing factor x16 (Drosophila melanogaster (Fruit fly)).